Consider the following 269-residue polypeptide: Mitochondrial acidic protein mam33 (269 aa).

It belongs to the MAM33 family.

Its subcellular location is the cytoplasm. The protein localises to the mitochondrion matrix. The polypeptide is Mitochondrial acidic protein mam33 (Schizosaccharomyces pombe (strain 972 / ATCC 24843) (Fission yeast)).